The following is a 206-amino-acid chain: Large ribosomal subunit protein uL4 (206 aa).

A disordered region spans residues 43–78; sequence ARSGNRKQKDREEVHHTTKKPWRQKGTGRARAGMSS. Residues 49–58 show a composition bias toward basic and acidic residues; sequence KQKDREEVHH. Positions 59–70 are enriched in basic residues; it reads TTKKPWRQKGTG.

Belongs to the universal ribosomal protein uL4 family. In terms of assembly, part of the 50S ribosomal subunit.

In terms of biological role, one of the primary rRNA binding proteins, this protein initially binds near the 5'-end of the 23S rRNA. It is important during the early stages of 50S assembly. It makes multiple contacts with different domains of the 23S rRNA in the assembled 50S subunit and ribosome. Forms part of the polypeptide exit tunnel. In Herminiimonas arsenicoxydans, this protein is Large ribosomal subunit protein uL4.